The following is an 89-amino-acid chain: UPF0237 protein lin0537 (89 aa).

Residues 4–78 (VLTVIGKDNV…EELQVKIHIQ (75 aa)) enclose the ACT domain.

This sequence belongs to the UPF0237 family.

This is UPF0237 protein lin0537 from Listeria innocua serovar 6a (strain ATCC BAA-680 / CLIP 11262).